The chain runs to 222 residues: Ribosomal RNA small subunit methyltransferase G (222 aa).

S-adenosyl-L-methionine contacts are provided by residues Gly-84, Phe-89, 141–142 (VE), and Arg-154.

Belongs to the methyltransferase superfamily. RNA methyltransferase RsmG family.

It localises to the cytoplasm. It carries out the reaction guanosine(527) in 16S rRNA + S-adenosyl-L-methionine = N(7)-methylguanosine(527) in 16S rRNA + S-adenosyl-L-homocysteine. Functionally, specifically methylates the N7 position of guanine in position 527 of 16S rRNA. This chain is Ribosomal RNA small subunit methyltransferase G, found in Bradyrhizobium sp. (strain ORS 278).